The primary structure comprises 453 residues: MNKLSVVILAAGKGTRMYSDLPKVLHKIAGKPMVKHVIDTAKKLSAAQIHLIYGHGADLLKQHLADEPVNWVFQSEQLGTGHAMQQAVPFFQDDENIVMLYGDVPLISKETLECLISQKPENGIALLTVNLDNPTGYGRVIRENGTVTAIVEQKDANPEQLKITEVNTGVMVSDGASFRKWLARLDNNNAQGEYYMTDVIGLANQDGFKVVAVQAKDLMEVEGVNNRLQLANLERHYQRKQVEKLLLAGVTFADPARFDLRGELTHGKDVEIDINVIIEGTVRLGNNVFIGAGCVLKNCTIADNVEIKPYSVIEDAIVGNNAKIGPFSRLRPGAELSENTHVGNFVEIKKAQIGKGSKVNHLTYIGDAEVGHHCNIGAGVITCNYDGANKFKTLIGDNVFVGSDSQLVAPLTIASGATIGAGTTVTKDVQENELVITRVPQRHISNWQRPKRK.

The pyrophosphorylase stretch occupies residues 1–227 (MNKLSVVILA…LMEVEGVNNR (227 aa)). UDP-N-acetyl-alpha-D-glucosamine is bound by residues 9–12 (LAAG), K23, Q74, 79–80 (GT), 101–103 (YGD), G138, E152, N167, and N225. Position 103 (D103) interacts with Mg(2+). N225 contacts Mg(2+). The tract at residues 228–248 (LQLANLERHYQRKQVEKLLLA) is linker. An N-acetyltransferase region spans residues 249–453 (GVTFADPARF…ISNWQRPKRK (205 aa)). 2 residues coordinate UDP-N-acetyl-alpha-D-glucosamine: R331 and K349. Residue H361 is the Proton acceptor of the active site. Residues Y364 and N375 each coordinate UDP-N-acetyl-alpha-D-glucosamine. Acetyl-CoA is bound by residues A378, 384-385 (NY), S403, A421, and R438.

It in the N-terminal section; belongs to the N-acetylglucosamine-1-phosphate uridyltransferase family. In the C-terminal section; belongs to the transferase hexapeptide repeat family. As to quaternary structure, homotrimer. Requires Mg(2+) as cofactor.

The protein localises to the cytoplasm. It carries out the reaction alpha-D-glucosamine 1-phosphate + acetyl-CoA = N-acetyl-alpha-D-glucosamine 1-phosphate + CoA + H(+). The enzyme catalyses N-acetyl-alpha-D-glucosamine 1-phosphate + UTP + H(+) = UDP-N-acetyl-alpha-D-glucosamine + diphosphate. It participates in nucleotide-sugar biosynthesis; UDP-N-acetyl-alpha-D-glucosamine biosynthesis; N-acetyl-alpha-D-glucosamine 1-phosphate from alpha-D-glucosamine 6-phosphate (route II): step 2/2. Its pathway is nucleotide-sugar biosynthesis; UDP-N-acetyl-alpha-D-glucosamine biosynthesis; UDP-N-acetyl-alpha-D-glucosamine from N-acetyl-alpha-D-glucosamine 1-phosphate: step 1/1. It functions in the pathway bacterial outer membrane biogenesis; LPS lipid A biosynthesis. Its function is as follows. Catalyzes the last two sequential reactions in the de novo biosynthetic pathway for UDP-N-acetylglucosamine (UDP-GlcNAc). The C-terminal domain catalyzes the transfer of acetyl group from acetyl coenzyme A to glucosamine-1-phosphate (GlcN-1-P) to produce N-acetylglucosamine-1-phosphate (GlcNAc-1-P), which is converted into UDP-GlcNAc by the transfer of uridine 5-monophosphate (from uridine 5-triphosphate), a reaction catalyzed by the N-terminal domain. The sequence is that of Bifunctional protein GlmU from Histophilus somni (strain 2336) (Haemophilus somnus).